Consider the following 389-residue polypeptide: Nucleic acid dioxygenase ALKBH1 (389 aa).

Residues 86–389 form a tRNA-binding region; that stretch reads SKWQAYGLKG…VKRARINPDS (304 aa). Substrate is bound by residues W144 and 175-177; that span reads YHY. Residues 208-347 form the Fe2OG dioxygenase domain; the sequence is GFEDFRAEAG…RVNMTVRQVL (140 aa). A 2-oxoglutarate-binding site is contributed by 220–222; the sequence is NYY. Fe cation is bound by residues H231, D233, and H287. D233 lines the substrate pocket. Position 338 to 344 (338 to 344) interacts with 2-oxoglutarate; sequence RVNMTVR.

Belongs to the alkB family. In terms of assembly, monomer. Interacts with DNAJB6. The cofactor is Fe(2+). Ubiquitous.

The protein resides in the nucleus. It is found in the mitochondrion. It carries out the reaction 2'-deoxyribonucleotide-(2'-deoxyribose 5'-phosphate)-2'-deoxyribonucleotide-DNA = a 3'-end 2'-deoxyribonucleotide-(2,3-dehydro-2,3-deoxyribose 5'-phosphate)-DNA + a 5'-end 5'-phospho-2'-deoxyribonucleoside-DNA + H(+). The enzyme catalyses a methylated nucleobase within DNA + 2-oxoglutarate + O2 = a nucleobase within DNA + formaldehyde + succinate + CO2. The catalysed reaction is an N(6)-methyl-2'-deoxyadenosine in DNA + 2-oxoglutarate + O2 = a 2'-deoxyadenosine in DNA + formaldehyde + succinate + CO2. It catalyses the reaction an N(1)-methyladenosine in tRNA + 2-oxoglutarate + O2 = an adenosine in tRNA + formaldehyde + succinate + CO2. It carries out the reaction 5-methylcytidine(34) in mitochondrial tRNA(Met) + 2 2-oxoglutarate + 2 O2 = 5-formylcytidine(34) in mitochondrial tRNA(Met) + 2 succinate + 2 CO2 + H2O. The enzyme catalyses an N(3)-methylcytidine in mRNA + 2-oxoglutarate + O2 = a cytidine in mRNA + formaldehyde + succinate + CO2. The catalysed reaction is N(1)-methyladenosine(58) in tRNA + 2-oxoglutarate + O2 = adenosine(58) in tRNA + formaldehyde + succinate + CO2. Dioxygenase that acts on nucleic acids, such as DNA and tRNA. Requires molecular oxygen, alpha-ketoglutarate and iron. A number of activities have been described for this dioxygenase, but recent results suggest that it mainly acts on tRNAs and mediates their demethylation or oxidation depending on the context and subcellular compartment. Mainly acts as a tRNA demethylase by removing N(1)-methyladenine from various tRNAs, with a preference for N(1)-methyladenine at position 58 (m1A58) present on a stem loop structure of tRNAs. Acts as a regulator of translation initiation and elongation in response to glucose deprivation: regulates both translation initiation, by mediating demethylation of tRNA(Met), and translation elongation, N(1)-methyladenine-containing tRNAs being preferentially recruited to polysomes to promote translation elongation. In mitochondrion, specifically interacts with mt-tRNA(Met) and mediates oxidation of mt-tRNA(Met) methylated at cytosine(34) to form 5-formylcytosine (f(5)c) at this position. mt-tRNA(Met) containing the f(5)c modification at the wobble position enables recognition of the AUA codon in addition to the AUG codon, expanding codon recognition in mitochondrial translation. Specifically demethylates DNA methylated on the 6th position of adenine (N(6)-methyladenosine) DNA. N(6)-methyladenosine (m6A) DNA is present at some L1 elements in embryonic stem cells and probably promotes their silencing. Demethylates mRNAs containing N(3)-methylcytidine modification. Also able to repair alkylated single-stranded DNA by oxidative demethylation, but with low activity. Also has DNA lyase activity and introduces double-stranded breaks at abasic sites: cleaves both single-stranded DNA and double-stranded DNA at abasic sites, with the greatest activity towards double-stranded DNA with two abasic sites. DNA lyase activity does not require alpha-ketoglutarate and iron and leads to the formation of an irreversible covalent protein-DNA adduct with the 5' DNA product. DNA lyase activity is not required during base excision repair and class switch recombination of the immunoglobulin heavy chain during B lymphocyte activation. May play a role in placental trophoblast lineage differentiation. The protein is Nucleic acid dioxygenase ALKBH1 of Homo sapiens (Human).